A 618-amino-acid chain; its full sequence is Phostensin (618 aa).

The span at 15 to 33 shows a compositional bias: basic and acidic residues; the sequence is RRQEEAAVRGREKAERERL. A disordered region spans residues 15-505; that stretch reads RRQEEAAVRG…PATADAAVPG (491 aa). Ser-54 bears the Phosphoserine mark. Over residues 96–109 the composition is skewed to low complexity; that stretch reads QQQQQQQQQQQQQQ. Composition is skewed to basic and acidic residues over residues 110–160 and 173–197; these read RSEE…ERRL and LESR…EVRK. Phosphoserine occurs at positions 131, 139, 181, and 201. Phosphothreonine is present on Thr-205. Ser-231 carries the phosphoserine modification. 2 stretches are compositionally biased toward basic and acidic residues: residues 234-245 and 271-289; these read DSDHEKLGLTDA and SGEE…EERT. Positions 308-319 are enriched in low complexity; the sequence is EAAGSSSGGVEA. The span at 348–358 shows a compositional bias: basic and acidic residues; sequence KVRDRTPRDTE. A compositionally biased stretch (pro residues) spans 429 to 451; the sequence is RPPPAAPLSPPPPAPPAPQPPGD. Residue Ser-437 is modified to Phosphoserine. An N6-acetyllysine modification is found at Lys-462. Residues 485 to 505 are compositionally biased toward low complexity; it reads APPAAAATPATPATADAAVPG. Ser-535 carries the phosphoserine modification. The interval 556-594 is disordered; it reads YQYPSESSVLEELGPEPEAPSAPSPPAAQPDDEEDEEEL. Over residues 572–583 the composition is skewed to pro residues; sequence PEAPSAPSPPAA. Positions 585 to 594 are enriched in acidic residues; sequence PDDEEDEEEL.

As to quaternary structure, interacts with Protein phosphatase 1 (PP1).

It localises to the cytoplasm. It is found in the cytoskeleton. May target protein phosphatase 1 to F-actin cytoskeleton. This Sus scrofa (Pig) protein is Phostensin (PPP1R18).